Consider the following 154-residue polypeptide: uncharacterized protein (154 aa).

Helical transmembrane passes span 39-61, 65-87, 94-113, and 128-150; these read LLIFGSIAIAYTVIYISGLFFAR, LPYIRKILEIGISVIFYFLVSLL, VESLLLLKTLFLVQTIRVFI, and LLINIFSILGGISFFIIKLSPFT.

Its subcellular location is the cell membrane. This is an uncharacterized protein from Aquifex aeolicus (strain VF5).